The chain runs to 357 residues: DENN domain-containing protein 10 (357 aa).

The uDENN domain maps to 1-136 (MAAVVAMDTQ…IAVLTKGICQ (136 aa)). The region spanning 152–299 (KAYLAGSIKD…PEKSDSQVIQ (148 aa)) is the cDENN domain. The dDENN domain occupies 301-357 (IALKTKEIFTHLAPFSEVSDDGGKVILNVEALKQQRFPPATENFLYHLAAAEQMLKV).

This sequence belongs to the DENND10 family. In terms of assembly, interacts with the coiled-coil heterodimer of CCDC22 and CCDC93; the interaction is direct. Interacts with RAB27A and RAB27B (GDP-bound forms preferentially).

The protein resides in the late endosome. In terms of biological role, guanine nucleotide exchange factor (GEF) regulating homeostasis of late endocytic pathway, including endosomal positioning, maturation and secretion, possibly through activating Rab proteins such as RAB27A and RAB27B. Promotes the exchange of GDP to GTP, converting inactive GDP-bound RAB27A and RAB27B into their active GTP-bound form. This chain is DENN domain-containing protein 10, found in Mus musculus (Mouse).